A 673-amino-acid polypeptide reads, in one-letter code: MKIHNIIKIIIVVCLEGFALTSFAGFGDSCASLPTTTDGYLESDTAYGYIIRSIDMKAPGGNCDANKPGITFCFKNKDGSSDPCTMYTLNQGDSKKISDLSKDNNPDLGANPILKNIVLTVQTWQNDICLLMPTSRGPMPVACKALSNPPAPPSVPSCSNIGQSCYTGANYSQSLINFSGLAVQCLKETLDKIFFVGNSCGSQSQSSEITNLTAFPTFQGYLKNAIGAALILYVMFFAFNMVLNKEYGNPDKIALFVIKLLFVTYFSIGLGPLNFNSSQPTQENGMLKYGLPLLTGIAPEFAQIIFNAAGSKGLCVFDTSKYQSGYQFYALWDSIDCRIGYYLGLDLLYNIDKNGVLSSFARGDGGNSSGSIPIPNLGNPDKNSPNALTSVGSLRFFTVMFGFFMAGNVIILISGLVFAVIFLSILLYFITHYLVCMITIYVMTYVSPIFIPMMLFNRTKGYFDGWLKVSLSCALQPAVVAGFIALLITMYDSAIFKNCEFLRYDYEKNNVKFSTFELRLPASSAEVCQESFGYKMLNYYAGKGWEEHLVILFPIKSIAKDVVSILAELLCVLVFSVIFYYFSKSISQFAADLTNGPKMDAVTASPTKIVDLVKQGAAFIKDAAQATQGKPPSSGDMPGDGGSKRSEGQKGDDSFISSGGNSSGDSLSSSGGK.

An N-terminal signal peptide occupies residues Met1–Ala24. Helical transmembrane passes span Asn224 to Asn244, Ile253 to Leu273, Ile410 to Ile430, Cys436 to Phe456, Val469 to Thr489, and Val562 to Phe582. The tract at residues Ala624 to Lys673 is disordered. Basic and acidic residues predominate over residues Gly642 to Asp653. Low complexity predominate over residues Ser654–Lys673.

It belongs to the TrbL/VirB6 family.

It is found in the cell membrane. This is an uncharacterized protein from Rickettsia bellii (strain RML369-C).